A 388-amino-acid polypeptide reads, in one-letter code: Chorismate synthase (388 aa).

R39 and R45 together coordinate NADP(+). FMN-binding positions include R132–S134, N251–A252, G296, K311–T315, and R337.

It belongs to the chorismate synthase family. In terms of assembly, homotetramer. FMNH2 serves as cofactor.

The catalysed reaction is 5-O-(1-carboxyvinyl)-3-phosphoshikimate = chorismate + phosphate. It participates in metabolic intermediate biosynthesis; chorismate biosynthesis; chorismate from D-erythrose 4-phosphate and phosphoenolpyruvate: step 7/7. Catalyzes the anti-1,4-elimination of the C-3 phosphate and the C-6 proR hydrogen from 5-enolpyruvylshikimate-3-phosphate (EPSP) to yield chorismate, which is the branch point compound that serves as the starting substrate for the three terminal pathways of aromatic amino acid biosynthesis. This reaction introduces a second double bond into the aromatic ring system. In Staphylococcus haemolyticus (strain JCSC1435), this protein is Chorismate synthase.